The sequence spans 620 residues: 1-deoxy-D-xylulose-5-phosphate synthase (620 aa).

Residues histidine 80 and 121 to 123 (GHS) contribute to the thiamine diphosphate site. Residue aspartate 152 coordinates Mg(2+). Thiamine diphosphate-binding positions include 153–154 (GA), asparagine 181, tyrosine 288, and glutamate 370. Asparagine 181 is a binding site for Mg(2+).

It belongs to the transketolase family. DXPS subfamily. Homodimer. Requires Mg(2+) as cofactor. It depends on thiamine diphosphate as a cofactor.

It catalyses the reaction D-glyceraldehyde 3-phosphate + pyruvate + H(+) = 1-deoxy-D-xylulose 5-phosphate + CO2. It participates in metabolic intermediate biosynthesis; 1-deoxy-D-xylulose 5-phosphate biosynthesis; 1-deoxy-D-xylulose 5-phosphate from D-glyceraldehyde 3-phosphate and pyruvate: step 1/1. Functionally, catalyzes the acyloin condensation reaction between C atoms 2 and 3 of pyruvate and glyceraldehyde 3-phosphate to yield 1-deoxy-D-xylulose-5-phosphate (DXP). This Enterobacter sp. (strain 638) protein is 1-deoxy-D-xylulose-5-phosphate synthase.